The primary structure comprises 417 residues: Serpin A3-7 (417 aa).

Residues 1–25 (MRTERTSFLLALGLLVSGFCSRVHC) form the signal peptide. 4 N-linked (GlcNAc...) asparagine glycosylation sites follow: Asn-103, Asn-183, Asn-221, and Asn-267.

This sequence belongs to the serpin family. In terms of assembly, homodimer.

The protein resides in the cytoplasmic vesicle. It localises to the secretory vesicle. It is found in the chromaffin granule. Its subcellular location is the secreted. In terms of biological role, serine protease inhibitor. The protein is Serpin A3-7 of Bos taurus (Bovine).